The sequence spans 406 residues: Leu/Ile/Val-binding protein homolog 5 (406 aa).

Residues 1-29 (MIGTRLPAWTRVLACGVAGLSLMTISAKA) form the signal peptide.

It belongs to the leucine-binding protein family.

Component of an amino-acid transport system. This Brucella suis biovar 1 (strain 1330) protein is Leu/Ile/Val-binding protein homolog 5.